The chain runs to 277 residues: Tumor necrosis factor receptor superfamily member 4 (277 aa).

The signal sequence occupies residues 1–28; sequence MCVGARRLGRGPCAALLLLGLGLSTVTG. At 29–214 the chain is on the extracellular side; the sequence is LHCVGDTYPS…RPVEVPGGRA (186 aa). TNFR-Cys repeat units follow at residues 30–65 and 66–107; these read HCVG…TVCR and PCGP…DTVC. 8 cysteine pairs are disulfide-bonded: cysteine 31-cysteine 42, cysteine 43-cysteine 56, cysteine 46-cysteine 64, cysteine 67-cysteine 81, cysteine 84-cysteine 99, cysteine 87-cysteine 107, cysteine 109-cysteine 125, and cysteine 128-cysteine 141. Residues 108–126 form a TNFR-Cys 3; truncated repeat; it reads RCRAGTQPLDSYKPGVDCA. The stretch at 127–167 is one TNFR-Cys 4 repeat; sequence PCPPGHFSPGDNQACKPWTNCTLAGKHTLQPASNSSDAICE. Residues asparagine 146 and asparagine 160 are each glycosylated (N-linked (GlcNAc...) asparagine). An intrachain disulfide couples cysteine 147 to cysteine 166. A disordered region spans residues 158–209; sequence ASNSSDAICEDRDPPATQPQETQGPPARPITVQPTEAWPRTSQGPSTRPVEV. Residues 215 to 235 traverse the membrane as a helical segment; it reads VAAILGLGLVLGLLGPLAILL. Over 236–277 the chain is Cytoplasmic; it reads ALYLLRRDQRLPPDAHKPPGGGSFRTPIQEEQADAHSTLAKI. A disordered region spans residues 248–277; the sequence is PDAHKPPGGGSFRTPIQEEQADAHSTLAKI.

In terms of assembly, interacts with TRAF2, TRAF3 and TRAF5. As to quaternary structure, (Microbial infection) Interacts with Human herpesvirus 6B/HHV-6B gQ1:gQ2 proteins.

It localises to the membrane. Its function is as follows. Receptor for TNFSF4/OX40L/GP34. Is a costimulatory molecule implicated in long-term T-cell immunity. (Microbial infection) Acts as a receptor for human herpesvirus 6B/HHV-6B. The protein is Tumor necrosis factor receptor superfamily member 4 (TNFRSF4) of Homo sapiens (Human).